The following is a 669-amino-acid chain: Cell surface receptor daf-1 (669 aa).

Positions 1 to 19 (MRIRHVVFCLLALVYGAET) are cleaved as a signal peptide. Topologically, residues 20–170 (SDDDLDERTN…APGPQQSSTW (151 aa)) are extracellular. Asparagine 49, asparagine 79, asparagine 133, and asparagine 154 each carry an N-linked (GlcNAc...) asparagine glycan. The chain crosses the membrane as a helical span at residues 171-191 (LILTILALLTFIVLLGIAIFL). Residues 192-669 (TRKSWEAKFD…NDDSSRPLLG (478 aa)) are Cytoplasmic-facing. A GS domain is found at 262–292 (NNMKDMLDVLEETSGSGMGPTTLHKLTIGGQ). Residues 293–593 (IRLTGRVGSG…KRMDERQQLL (301 aa)) form the Protein kinase domain. ATP-binding positions include 299-307 (VGSGRFGNV) and lysine 320. Aspartate 423 acts as the Proton acceptor in catalysis. 2 stretches are compositionally biased toward basic and acidic residues: residues 611 to 624 (DRKI…KDES) and 633 to 650 (VQKE…RETA). The interval 611-669 (DRKILGPQKPKDESPANGAPRIVQKEIDREDEQENWRETAKTPNGHISSNDDSSRPLLG) is disordered. Polar residues predominate over residues 651-661 (KTPNGHISSND).

Belongs to the protein kinase superfamily. TKL Ser/Thr protein kinase family. TGFB receptor subfamily. As to quaternary structure, may interact with daf-4 to regulate dauer larva development. In terms of tissue distribution, head and ventral nerve cord from embryos to adults. Expressed in many sensory neurons. Subset of head neurons show coexpression with daf-4 when dauer/nondauer decision is made. Also expressed in non-neuronal cells: membraneous sheath surrounding the distal end of the intestine and in the distal tip cell of the gonad.

It is found in the membrane. The catalysed reaction is L-threonyl-[receptor-protein] + ATP = O-phospho-L-threonyl-[receptor-protein] + ADP + H(+). It carries out the reaction L-seryl-[receptor-protein] + ATP = O-phospho-L-seryl-[receptor-protein] + ADP + H(+). Probably involved in a TGF-beta pathway. May be a receptor for TGF-beta-like ligand daf-7. Controls the decision of whether or not larvae enter a developmentally arrested state, known as dauer, in response to environmental conditions. Involved in regulating entry into quiescence triggered by satiety. Involved in sensitivity to CO2 levels. In AWC neurons, acts to promote expression of srsx-3, a member of the GPCR family. In Caenorhabditis elegans, this protein is Cell surface receptor daf-1 (daf-1).